Consider the following 171-residue polypeptide: Protein-export protein SecB (171 aa).

This sequence belongs to the SecB family. As to quaternary structure, homotetramer, a dimer of dimers. One homotetramer interacts with 1 SecA dimer.

The protein resides in the cytoplasm. One of the proteins required for the normal export of preproteins out of the cell cytoplasm. It is a molecular chaperone that binds to a subset of precursor proteins, maintaining them in a translocation-competent state. It also specifically binds to its receptor SecA. This Granulibacter bethesdensis (strain ATCC BAA-1260 / CGDNIH1) protein is Protein-export protein SecB.